A 464-amino-acid polypeptide reads, in one-letter code: MLTNTKPDEKIFQKNSTTGSYWITTFGCQMNKADSERMAGTLEKMGYTRADNELNADLVLYNTCTIRDNAEQKVYSFLGRQAKRKHKTPSLKLVVAGCLAQQEGESLLRRVPELDLVMGPQHVNNLENLLGKVDLGNQVAATEENFISEDITSARRESSICGWVNIIYGCNERCSYCVVPSVRGKEQSRYPNAIKSEIQKLAGDNFKEITLLGQNIDAYGRDLPGTTKEGRKENTLTDLLYYIHDVKGIRRIRFATSHPRYFSKRLIQACYELDKVCEHFHIPFQSGNDEILKQMSRGYTIKKYKNIIENIRSLMPDASITADAIVAFPGETEKQYQDTLKLITEIGFDQVNTAAYSPRPNTPAAVWSNQLSEEVKKARLQEINDLVEKTARSRNKRYINNIESVLIEGLNPKNSSQIMGRTRTNRLTFVEIPKNIDFNFSLGDEIDVRINETRPFSLTGELYL.

In terms of domain architecture, MTTase N-terminal spans 19-135; sequence GSYWITTFGC…LENLLGKVDL (117 aa). Positions 28, 64, 98, 170, 174, and 177 each coordinate [4Fe-4S] cluster. The Radical SAM core domain maps to 156-394; sequence RESSICGWVN…DLVEKTARSR (239 aa). Positions 396–464 constitute a TRAM domain; it reads KRYINNIESV…PFSLTGELYL (69 aa).

This sequence belongs to the methylthiotransferase family. MiaB subfamily. As to quaternary structure, monomer. It depends on [4Fe-4S] cluster as a cofactor.

Its subcellular location is the cytoplasm. It catalyses the reaction N(6)-dimethylallyladenosine(37) in tRNA + (sulfur carrier)-SH + AH2 + 2 S-adenosyl-L-methionine = 2-methylsulfanyl-N(6)-dimethylallyladenosine(37) in tRNA + (sulfur carrier)-H + 5'-deoxyadenosine + L-methionine + A + S-adenosyl-L-homocysteine + 2 H(+). In terms of biological role, catalyzes the methylthiolation of N6-(dimethylallyl)adenosine (i(6)A), leading to the formation of 2-methylthio-N6-(dimethylallyl)adenosine (ms(2)i(6)A) at position 37 in tRNAs that read codons beginning with uridine. This Prochlorococcus marinus (strain AS9601) protein is tRNA-2-methylthio-N(6)-dimethylallyladenosine synthase.